The following is a 144-amino-acid chain: 3-hydroxyacyl-[acyl-carrier-protein] dehydratase FabZ (144 aa).

His-52 is a catalytic residue.

Belongs to the thioester dehydratase family. FabZ subfamily.

It is found in the cytoplasm. The catalysed reaction is a (3R)-hydroxyacyl-[ACP] = a (2E)-enoyl-[ACP] + H2O. Functionally, involved in unsaturated fatty acids biosynthesis. Catalyzes the dehydration of short chain beta-hydroxyacyl-ACPs and long chain saturated and unsaturated beta-hydroxyacyl-ACPs. The sequence is that of 3-hydroxyacyl-[acyl-carrier-protein] dehydratase FabZ from Syntrophomonas wolfei subsp. wolfei (strain DSM 2245B / Goettingen).